The chain runs to 145 residues: Large ribosomal subunit protein uL11 (145 aa).

Belongs to the universal ribosomal protein uL11 family. In terms of assembly, part of the ribosomal stalk of the 50S ribosomal subunit. Interacts with L10 and the large rRNA to form the base of the stalk. L10 forms an elongated spine to which L12 dimers bind in a sequential fashion forming a multimeric L10(L12)X complex. One or more lysine residues are methylated.

Forms part of the ribosomal stalk which helps the ribosome interact with GTP-bound translation factors. This Corynebacterium glutamicum (strain ATCC 13032 / DSM 20300 / JCM 1318 / BCRC 11384 / CCUG 27702 / LMG 3730 / NBRC 12168 / NCIMB 10025 / NRRL B-2784 / 534) protein is Large ribosomal subunit protein uL11.